Here is a 234-residue protein sequence, read N- to C-terminus: Peptidase E (234 aa).

Residues serine 123, aspartate 138, and histidine 160 each act as charge relay system in the active site.

Belongs to the peptidase S51 family.

It localises to the cytoplasm. It carries out the reaction Dipeptidase E catalyzes the hydrolysis of dipeptides Asp-|-Xaa. It does not act on peptides with N-terminal Glu, Asn or Gln, nor does it cleave isoaspartyl peptides.. Hydrolyzes dipeptides containing N-terminal aspartate residues. May play a role in allowing the cell to use peptide aspartate to spare carbon otherwise required for the synthesis of the aspartate family of amino acids. This chain is Peptidase E, found in Haemophilus influenzae (strain PittGG).